A 163-amino-acid polypeptide reads, in one-letter code: Inorganic pyrophosphatase (163 aa).

Mg(2+) is bound at residue glutamate 8. Lysine 16, arginine 30, and tyrosine 42 together coordinate substrate. 4 residues coordinate Mg(2+): aspartate 52, aspartate 57, aspartate 84, and aspartate 89. The Proton acceptor role is filled by aspartate 89. Residue tyrosine 126 coordinates substrate.

This sequence belongs to the PPase family. As to quaternary structure, homohexamer. The cofactor is Mg(2+).

It localises to the cytoplasm. The catalysed reaction is diphosphate + H2O = 2 phosphate + H(+). Functionally, catalyzes the hydrolysis of inorganic pyrophosphate (PPi) forming two phosphate ions. This Streptomyces coelicolor (strain ATCC BAA-471 / A3(2) / M145) protein is Inorganic pyrophosphatase.